The following is a 38-amino-acid chain: Photosystem II reaction center protein L (38 aa).

Residues 17 to 37 (SLYWGLLLIFVLAVLFSNYFF) form a helical membrane-spanning segment.

It belongs to the PsbL family. As to quaternary structure, PSII is composed of 1 copy each of membrane proteins PsbA, PsbB, PsbC, PsbD, PsbE, PsbF, PsbH, PsbI, PsbJ, PsbK, PsbL, PsbM, PsbT, PsbX, PsbY, PsbZ, Psb30/Ycf12, at least 3 peripheral proteins of the oxygen-evolving complex and a large number of cofactors. It forms dimeric complexes.

The protein resides in the plastid. Its subcellular location is the chloroplast thylakoid membrane. One of the components of the core complex of photosystem II (PSII). PSII is a light-driven water:plastoquinone oxidoreductase that uses light energy to abstract electrons from H(2)O, generating O(2) and a proton gradient subsequently used for ATP formation. It consists of a core antenna complex that captures photons, and an electron transfer chain that converts photonic excitation into a charge separation. This subunit is found at the monomer-monomer interface and is required for correct PSII assembly and/or dimerization. This is Photosystem II reaction center protein L from Angiopteris evecta (Mule's foot fern).